A 174-amino-acid chain; its full sequence is V-type proton ATPase catalytic subunit A (174 aa).

The protein belongs to the ATPase alpha/beta chains family. As to quaternary structure, V-ATPase is a heteromultimeric enzyme made up of two complexes: the ATP-hydrolytic V1 complex and the proton translocation V0 complex. The V1 complex consists of three catalytic AB heterodimers that form a heterohexamer, three peripheral stalks each consisting of EG heterodimers, one central rotor including subunits D and F, and the regulatory subunits C and H. The proton translocation complex V0 consists of the proton transport subunit a, a ring of proteolipid subunits c9c'', rotary subunit d, subunits e and f, and the accessory subunits ATP6AP1/Ac45 and ATP6AP2/PRR. Interacts with the V0 complex V-ATPase subunit a4 ATP6V0A4. Interacts with WFS1. Interacts with alpha-crystallin B chain/CRYAB and with MTOR, forming a ternary complex.

It is found in the cytoplasm. It localises to the cytosol. Its subcellular location is the cytoplasmic vesicle. The protein localises to the secretory vesicle. The protein resides in the clathrin-coated vesicle membrane. It is found in the lysosome. It carries out the reaction ATP + H2O + 4 H(+)(in) = ADP + phosphate + 5 H(+)(out). ATP hydrolysis occurs at the interface between the nucleotide-binding domains of subunits A and B. ATP hydrolysis triggers a conformational change in the subunits D and F, which induces a shift of subunit d. The c-ring is subsequently rotated and results in a continuous proton translocation across the membrane. Its function is as follows. Catalytic subunit of the V1 complex of vacuolar(H+)-ATPase (V-ATPase), a multisubunit enzyme composed of a peripheral complex (V1) that hydrolyzes ATP and a membrane integral complex (V0) that translocates protons. V-ATPase is responsible for acidifying and maintaining the pH of intracellular compartments and in some cell types, is targeted to the plasma membrane, where it is responsible for acidifying the extracellular environment. In aerobic conditions, involved in intracellular iron homeostasis, thus triggering the activity of Fe(2+) prolyl hydroxylase (PHD) enzymes, and leading to HIF1A hydroxylation and subsequent proteasomal degradation. May play a role in neurite development and synaptic connectivity. The protein is V-type proton ATPase catalytic subunit A of Mesocricetus auratus (Golden hamster).